A 376-amino-acid chain; its full sequence is Flap endonuclease 1 (376 aa).

Positions 1–105 (MGIKGLSKLL…GELHKRKENA (105 aa)) are N-domain. D34 provides a ligand contact to Mg(2+). DNA is bound by residues R47 and R71. The Mg(2+) site is built by D87, E159, E161, D180, and D182. The interval 123-254 (QAKKLMKRTA…ITAFELIQQY (132 aa)) is I-domain. Position 159 (E159) interacts with DNA. DNA-binding residues include G232 and D234. Residue D234 coordinates Mg(2+). Residues 336–344 (AQGRLDSFF) form an interaction with PCNA region. The interval 354-376 (SEAASGVKRKKPTTKAKESRKKK) is disordered. Basic residues predominate over residues 360 to 376 (VKRKKPTTKAKESRKKK).

It belongs to the XPG/RAD2 endonuclease family. FEN1 subfamily. In terms of assembly, interacts with PCNA. Three molecules of FEN1 bind to one PCNA trimer with each molecule binding to one PCNA monomer. PCNA stimulates the nuclease activity without altering cleavage specificity. Mg(2+) is required as a cofactor. Post-translationally, phosphorylated. Phosphorylation upon DNA damage induces relocalization to the nuclear plasma.

The protein localises to the nucleus. Its subcellular location is the nucleolus. The protein resides in the nucleoplasm. It is found in the mitochondrion. Its function is as follows. Structure-specific nuclease with 5'-flap endonuclease and 5'-3' exonuclease activities involved in DNA replication and repair. During DNA replication, cleaves the 5'-overhanging flap structure that is generated by displacement synthesis when DNA polymerase encounters the 5'-end of a downstream Okazaki fragment. It enters the flap from the 5'-end and then tracks to cleave the flap base, leaving a nick for ligation. Also involved in the long patch base excision repair (LP-BER) pathway, by cleaving within the apurinic/apyrimidinic (AP) site-terminated flap. Acts as a genome stabilization factor that prevents flaps from equilibrating into structures that lead to duplications and deletions. Also possesses 5'-3' exonuclease activity on nicked or gapped double-stranded DNA, and exhibits RNase H activity. Also involved in replication and repair of rDNA and in repairing mitochondrial DNA. The protein is Flap endonuclease 1 of Entamoeba histolytica (strain ATCC 30459 / HM-1:IMSS / ABRM).